A 238-amino-acid polypeptide reads, in one-letter code: MSNPLLVCQGIRKVYQEGAMETEVLKGVDFQINGSELVAIVGSSGSGKSTLLHILGALDEPTAGTVHFQENELTKLSANKQAKIRNQHIGFVYQFHHLLADFSALENVAMPLLIGGVNKKEAAKRATELLEKVGLAHRIEHRPSELSGGERQRVAIARALVNKPALVLADEPTGNLDHKTALDIYNLMRELNQESGTAFLVVTHDNELAAKLDKQLSMQDGRFITETVRSSLAQEMEA.

In terms of domain architecture, ABC transporter spans 6–238 (LVCQGIRKVY…RSSLAQEMEA (233 aa)). 42-49 (GSSGSGKS) lines the ATP pocket.

It belongs to the ABC transporter superfamily. Lipoprotein translocase (TC 3.A.1.125) family. As to quaternary structure, the complex is composed of two ATP-binding proteins (LolD) and two transmembrane proteins (LolC and LolE).

Its subcellular location is the cell inner membrane. Functionally, part of the ABC transporter complex LolCDE involved in the translocation of mature outer membrane-directed lipoproteins, from the inner membrane to the periplasmic chaperone, LolA. Responsible for the formation of the LolA-lipoprotein complex in an ATP-dependent manner. The polypeptide is Lipoprotein-releasing system ATP-binding protein LolD (Aliivibrio fischeri (strain ATCC 700601 / ES114) (Vibrio fischeri)).